Here is a 1247-residue protein sequence, read N- to C-terminus: Clustered mitochondria protein homolog (1247 aa).

The disordered stretch occupies residues 1-43 (MTLGSETKTDVEVPIINGKHEIPQEENDSGHSSINTPDSSEPD). Positions 30–39 (GHSSINTPDS) are enriched in polar residues. The region spanning 329-579 (SDSLRAIELT…RSMPPDVHYL (251 aa)) is the Clu domain. Positions 1222 to 1247 (GKQQNGTTEESKTTDVAAQLDNETLD) are disordered.

Belongs to the CLU family.

Its subcellular location is the cytoplasm. Its function is as follows. mRNA-binding protein involved in proper cytoplasmic distribution of mitochondria. This chain is Clustered mitochondria protein homolog, found in Caenorhabditis elegans.